The primary structure comprises 4328 residues: Cadherin-4 (4328 aa).

Residues 1 to 23 form the signal peptide; the sequence is MKKHRVFHLFLLIFCKAISLVTT. Topologically, residues 24–4072 are extracellular; sequence SSSTEQIFEF…TVLEFLLKAE (4049 aa). 2 N-linked (GlcNAc...) asparagine glycosylation sites follow: asparagine 39 and asparagine 56. 2 consecutive Cadherin domains span residues 108–153 and 156–275; these read PLNR…SPVF and GEQG…NPNI. Residues asparagine 196, asparagine 330, asparagine 339, asparagine 365, asparagine 431, asparagine 452, and asparagine 584 are each glycosylated (N-linked (GlcNAc...) asparagine). Cadherin domains lie at 384 to 492, 507 to 608, 609 to 720, 721 to 826, 827 to 934, 935 to 1051, 1047 to 1156, 1175 to 1262, 1265 to 1363, 1364 to 1467, and 1476 to 1570; these read DNEK…APVF, PGDV…SPVF, SSFP…SPQF, DEVS…PPKC, VVQH…AIEF, DDVA…KPMY, KKPM…SPTF, RIFA…PPEI, KKSD…RPKF, SASH…SPYF, and VDES…APET. N-linked (GlcNAc...) asparagine glycosylation is found at asparagine 811 and asparagine 899. The short motif at 1090–1092 is the Cell attachment site element; the sequence is RGD. Asparagine 1192 carries N-linked (GlcNAc...) asparagine glycosylation. The segment at 1246 to 1267 is disordered; it reads NSAGQKPRKSKNSPPEISGKKS. The N-linked (GlcNAc...) asparagine glycan is linked to asparagine 1335. Asparagine 1610 carries an N-linked (GlcNAc...) asparagine glycan. Residues 1671-1784 form the Cadherin 14 domain; it reads RRQVYRGTIR…IDENDEPPRF (114 aa). Asparagine 1895 carries N-linked (GlcNAc...) asparagine glycosylation. In terms of domain architecture, Cadherin 15 spans 1917 to 1984; sequence FSIVNPHEAF…ENINDETPIF (68 aa). Asparagine 2059, asparagine 2150, asparagine 2216, asparagine 2367, asparagine 2413, asparagine 2440, and asparagine 2535 each carry an N-linked (GlcNAc...) asparagine glycan. Cadherin domains are found at residues 2187–2285 and 2286–2397; these read EKLK…MPEF and IRSD…PPRF. Cadherin domains are found at residues 2429–2505, 2506–2608, 2609–2712, 2719–2813, 2828–2915, 2913–3011, 3012–3113, 3114–3216, and 3217–3326; these read LQFS…PPFF, VLPF…VPRF, SNSH…APAF, FTIS…PPQF, SPIL…CPEA, PEAN…RPKI, IEKL…APTF, EKST…APKF, and EKEK…APTF. N-linked (GlcNAc...) asparagine glycans are attached at residues asparagine 2844, asparagine 2916, asparagine 2941, asparagine 3083, and asparagine 3143. Residue asparagine 3330 is glycosylated (N-linked (GlcNAc...) asparagine). Cadherin domains are found at residues 3335 to 3428 and 3429 to 3554; these read VQEG…APTM and KPMK…VDEF. An N-linked (GlcNAc...) asparagine glycan is attached at asparagine 3512. The EGF-like 1 domain maps to 3706-3744; it reads ETNQCAKSPCEQWQLCIPSVHNSTYECVCPLGMEGDKCS. Intrachain disulfides connect cysteine 3710–cysteine 3721, cysteine 3715–cysteine 3732, cysteine 3734–cysteine 3743, cysteine 3898–cysteine 3925, cysteine 3933–cysteine 3944, cysteine 3938–cysteine 3954, cysteine 3956–cysteine 3965, cysteine 3972–cysteine 3983, cysteine 3977–cysteine 3992, and cysteine 3994–cysteine 4003. Residue asparagine 3727 is glycosylated (N-linked (GlcNAc...) asparagine). The region spanning 3757 to 3925 is the Laminin G-like domain; the sequence is EAELSVGGDG…MKLFGAQPGC (169 aa). 2 EGF-like domains span residues 3929 to 3966 and 3968 to 4004; these read TSSP…NVCE and DLEP…KHCE. Asparagine 4043 carries an N-linked (GlcNAc...) asparagine glycan. A helical transmembrane segment spans residues 4073-4093; that stretch reads IVIVILGVLLLLLVFCLTFIT. The Cytoplasmic segment spans residues 4094–4328; that stretch reads WKCCKKNRDP…IDEEVNIHIS (235 aa). Disordered regions lie at residues 4143–4215 and 4268–4311; these read TSSV…SSLR and NFER…PISL. Residues 4178-4196 show a composition bias toward basic and acidic residues; sequence TRRDPLPSDKFRRVDETAN. The Cell attachment site motif lies at 4207 to 4209; the sequence is RGD.

As to expression, in larvae and adult, it is expressed in various tissues including pharyngeal muscle, hypodermis and gonad. In the nervous system it is expressed in sensory neurons and motor neurons in the ventral cord.

The protein resides in the cell membrane. Potential calcium-dependent cell-adhesion protein that controls axon guidance in the ventral cord. This chain is Cadherin-4, found in Caenorhabditis elegans.